We begin with the raw amino-acid sequence, 492 residues long: Bifunctional purine biosynthesis protein PurH (492 aa).

The region spanning 1 to 144 is the MGS-like domain; it reads MKKAILSVSN…KNFKHVTTIV (144 aa).

It belongs to the PurH family.

The enzyme catalyses (6R)-10-formyltetrahydrofolate + 5-amino-1-(5-phospho-beta-D-ribosyl)imidazole-4-carboxamide = 5-formamido-1-(5-phospho-D-ribosyl)imidazole-4-carboxamide + (6S)-5,6,7,8-tetrahydrofolate. It catalyses the reaction IMP + H2O = 5-formamido-1-(5-phospho-D-ribosyl)imidazole-4-carboxamide. The protein operates within purine metabolism; IMP biosynthesis via de novo pathway; 5-formamido-1-(5-phospho-D-ribosyl)imidazole-4-carboxamide from 5-amino-1-(5-phospho-D-ribosyl)imidazole-4-carboxamide (10-formyl THF route): step 1/1. Its pathway is purine metabolism; IMP biosynthesis via de novo pathway; IMP from 5-formamido-1-(5-phospho-D-ribosyl)imidazole-4-carboxamide: step 1/1. The polypeptide is Bifunctional purine biosynthesis protein PurH (Staphylococcus epidermidis (strain ATCC 35984 / DSM 28319 / BCRC 17069 / CCUG 31568 / BM 3577 / RP62A)).